The primary structure comprises 1168 residues: Transcription-repair-coupling factor (1168 aa).

The region spanning 633–794 (DMQKSRPMDR…MLGVRDLSVI (162 aa)) is the Helicase ATP-binding domain. Residue 646–653 (GDVGYGKT) coordinates ATP. The DEEQ box signature appears at 747–750 (DEEQ). The region spanning 808 to 969 (VLEQNMSFIK…GFKIAMRDLN (162 aa)) is the Helicase C-terminal domain.

It in the N-terminal section; belongs to the UvrB family. In the C-terminal section; belongs to the helicase family. RecG subfamily.

It localises to the cytoplasm. Its function is as follows. Couples transcription and DNA repair by recognizing RNA polymerase (RNAP) stalled at DNA lesions. Mediates ATP-dependent release of RNAP and its truncated transcript from the DNA, and recruitment of nucleotide excision repair machinery to the damaged site. This is Transcription-repair-coupling factor from Staphylococcus aureus (strain MSSA476).